We begin with the raw amino-acid sequence, 655 residues long: T-lymphocyte surface antigen Ly-9 (655 aa).

The signal sequence occupies residues 1–47; that stretch reads MVAPKSHTDDWAPGPFSSKPQRSQLQIFSSVLQTSLLFLLMGLRASG. An Ig-like V-type 1 domain is found at 48-158; the sequence is KDSAPTVVSG…FVYEQLQEPQ (111 aa). Residues 48–454 are Extracellular-facing; sequence KDSAPTVVSG…ICSGPERNTK (407 aa). N-linked (GlcNAc...) asparagine glycosylation is found at N68, N95, N120, N169, and N173. The Ig-like C2-type 1 domain maps to 159 to 235; the sequence is VTMKSVKVSE…NPVSQRSSLP (77 aa). 2 disulfides stabilise this stretch: C172-C242 and C178-C222. Residues 251–363 form the Ig-like V-type 2 domain; that stretch reads GTTGETVVGV…LLIYRRLRKP (113 aa). N-linked (GlcNAc...) asparagine glycans are attached at residues N285, N413, and N424. Residues 364-452 form the Ig-like C2-type 2 domain; it reads KITWSLRHSE…ENICSGPERN (89 aa). 2 disulfides stabilise this stretch: C377–C446 and C383–C427. The helical transmembrane segment at 455 to 476 threads the bilayer; that stretch reads LWIGLFLMVCLLCVGIFSWCIW. The Cytoplasmic portion of the chain corresponds to 477-655; the sequence is KRKGRCSVPA…PESPTYENFT (179 aa). Residues 521–556 form a disordered region; sequence PLRPARQQPTPTSDSSSDSNLTTEEDEDRPEVHKPI. Residues 530 to 542 are compositionally biased toward low complexity; sequence TPTSDSSSDSNLT. 2 consecutive short sequence motifs (ITSM) follow at residues 601–606 and 624–629; these read TMYAQV and TIYCSI. Y603 carries the phosphotyrosine modification. Residues 633–655 form a disordered region; it reads QVVPPPQQNDLEIPESPTYENFT.

Interacts with SH2D1A, SH2D1B and INPP5D. Interacts (via phosphorylated cytoplasmic domain) with PTPN11; the interaction is blocked by SH2D1A. Increased surface expression on T-cells of systemic lupus erythematosus (SLE) patients.

It is found in the membrane. Its subcellular location is the cell membrane. Functionally, self-ligand receptor of the signaling lymphocytic activation molecule (SLAM) family. SLAM receptors triggered by homo- or heterotypic cell-cell interactions are modulating the activation and differentiation of a wide variety of immune cells and thus are involved in the regulation and interconnection of both innate and adaptive immune response. Activities are controlled by presence or absence of small cytoplasmic adapter proteins, SH2D1A/SAP and/or SH2D1B/EAT-2. May participate in adhesion reactions between T lymphocytes and accessory cells by homophilic interaction. Promotes T-cell differentiation into a helper T-cell Th17 phenotype leading to increased IL-17 secretion; the costimulatory activity requires SH2D1A. Promotes recruitment of RORC to the IL-17 promoter. May be involved in the maintenance of peripheral cell tolerance by serving as a negative regulator of the immune response. May disable autoantibody responses and inhibit IFN-gamma secretion by CD4(+) T-cells. May negatively regulate the size of thymic innate CD8(+) T-cells and the development of invariant natural killer T (iNKT) cells. The chain is T-lymphocyte surface antigen Ly-9 (LY9) from Homo sapiens (Human).